We begin with the raw amino-acid sequence, 430 residues long: Histidine--tRNA ligase (430 aa).

The protein belongs to the class-II aminoacyl-tRNA synthetase family. In terms of assembly, homodimer.

It localises to the cytoplasm. It carries out the reaction tRNA(His) + L-histidine + ATP = L-histidyl-tRNA(His) + AMP + diphosphate + H(+). The polypeptide is Histidine--tRNA ligase (Lactococcus lactis subsp. cremoris (strain SK11)).